The chain runs to 223 residues: Zinc-finger homeodomain protein 12 (223 aa).

Polar residues predominate over residues 1–20 (MSSLSKPNRQFLSPTTNNQD). Residues 1 to 24 (MSSLSKPNRQFLSPTTNNQDTGRE) are disordered. Residues 37 to 88 (YNECLKNHAVSLGGHALDGCGEFTPKSTTILTDPPSLRCDACGCHRNFHRRS) form a ZF-HD dimerization-type; degenerate zinc finger. The segment at residues 147 to 204 (KKHKRTKFTAEQKVKMRGFAERAGWKINGWDEKWVREFCSEVGIERKVLKVWIHNNKY) is a DNA-binding region (homeobox; atypical).

In terms of assembly, homo- and heterodimer with other ZFHD proteins. Interacts with ZHD11.

The protein resides in the nucleus. In terms of biological role, putative transcription factor. In Arabidopsis thaliana (Mouse-ear cress), this protein is Zinc-finger homeodomain protein 12 (ZHD12).